The sequence spans 271 residues: Putative glucose-6-phosphate 1-epimerase (271 aa).

Arginine 71 and arginine 93 together coordinate substrate. Residue histidine 151 is part of the active site. A substrate-binding site is contributed by aspartate 193. Glutamate 249 is an active-site residue.

It belongs to the glucose-6-phosphate 1-epimerase family.

The enzyme catalyses alpha-D-glucose 6-phosphate = beta-D-glucose 6-phosphate. This Haemophilus influenzae (strain ATCC 51907 / DSM 11121 / KW20 / Rd) protein is Putative glucose-6-phosphate 1-epimerase.